We begin with the raw amino-acid sequence, 355 residues long: Septin-2B (355 aa).

In terms of domain architecture, Septin-type G spans 33–305 (KGFEFTLMVV…ENFRSERLKK (273 aa)). Residues 43–50 (GESGLGKS) are G1 motif. GTP-binding positions include 43–50 (GESGLGKS), Thr77, Gly103, 182–190 (KADTLTLRE), Gly240, and Arg255. Positions 100 to 103 (DTPG) are G3 motif. Residues 181 to 184 (AKAD) are G4 motif. An important for dimerization region spans residues 259–269 (WGVVEVENPEH).

It belongs to the TRAFAC class TrmE-Era-EngA-EngB-Septin-like GTPase superfamily. Septin GTPase family. Septins polymerize into heterooligomeric protein complexes that form filaments, and associate with cellular membranes, actin filaments and microtubules. GTPase activity is required for filament formation. Can form heterooligomers with other family members and form filaments. Interacts with wdpcp.

The protein localises to the cytoplasm. It localises to the cytoskeleton. The protein resides in the spindle. It is found in the cleavage furrow. Its subcellular location is the midbody. The protein localises to the cell cortex. It localises to the cell projection. The protein resides in the cilium membrane. Filament-forming cytoskeletal GTPase. Required for normal organization of the actin cytoskeleton. Plays a role in the biogenesis of polarized columnar-shaped epithelium. Required for the progression through mitosis through regulation of chromosome congression. During anaphase, may be required for chromosome segregation and spindle elongation. Plays a role in ciliogenesis and collective cell movements including convergent extension during gastrulation. In cilia, required for the integrity of the diffusion barrier at the base of the primary cilium that prevents diffusion of transmembrane proteins between the cilia and plasma membranes. Controls cell shape and not polarization of cells during convergent extension. This chain is Septin-2B (sept2-B), found in Xenopus tropicalis (Western clawed frog).